The primary structure comprises 737 residues: 1,4-alpha-glucan branching enzyme GlgB (737 aa).

Aspartate 399 acts as the Nucleophile in catalysis. Residue glutamate 452 is the Proton donor of the active site.

The protein belongs to the glycosyl hydrolase 13 family. GlgB subfamily. As to quaternary structure, monomer.

The enzyme catalyses Transfers a segment of a (1-&gt;4)-alpha-D-glucan chain to a primary hydroxy group in a similar glucan chain.. Its pathway is glycan biosynthesis; glycogen biosynthesis. Catalyzes the formation of the alpha-1,6-glucosidic linkages in glycogen by scission of a 1,4-alpha-linked oligosaccharide from growing alpha-1,4-glucan chains and the subsequent attachment of the oligosaccharide to the alpha-1,6 position. This Chlamydia muridarum (strain MoPn / Nigg) protein is 1,4-alpha-glucan branching enzyme GlgB.